Reading from the N-terminus, the 354-residue chain is 3-dehydroquinate synthase (354 aa).

NAD(+)-binding positions include 69 to 74 (DGEAEK), 103 to 107 (GVIGD), 127 to 128 (TS), Lys-140, and Lys-149. Glu-182, His-245, and His-262 together coordinate Zn(2+).

The protein belongs to the sugar phosphate cyclases superfamily. Dehydroquinate synthase family. Co(2+) is required as a cofactor. It depends on Zn(2+) as a cofactor. The cofactor is NAD(+).

The protein resides in the cytoplasm. The catalysed reaction is 7-phospho-2-dehydro-3-deoxy-D-arabino-heptonate = 3-dehydroquinate + phosphate. It functions in the pathway metabolic intermediate biosynthesis; chorismate biosynthesis; chorismate from D-erythrose 4-phosphate and phosphoenolpyruvate: step 2/7. Functionally, catalyzes the conversion of 3-deoxy-D-arabino-heptulosonate 7-phosphate (DAHP) to dehydroquinate (DHQ). In Colwellia psychrerythraea (strain 34H / ATCC BAA-681) (Vibrio psychroerythus), this protein is 3-dehydroquinate synthase.